The chain runs to 232 residues: Enolase-phosphatase E1 (232 aa).

Belongs to the HAD-like hydrolase superfamily. MasA/MtnC family. In terms of assembly, monomer. Requires Mg(2+) as cofactor.

It catalyses the reaction 5-methylsulfanyl-2,3-dioxopentyl phosphate + H2O = 1,2-dihydroxy-5-(methylsulfanyl)pent-1-en-3-one + phosphate. It participates in amino-acid biosynthesis; L-methionine biosynthesis via salvage pathway; L-methionine from S-methyl-5-thio-alpha-D-ribose 1-phosphate: step 3/6. It functions in the pathway amino-acid biosynthesis; L-methionine biosynthesis via salvage pathway; L-methionine from S-methyl-5-thio-alpha-D-ribose 1-phosphate: step 4/6. Its function is as follows. Bifunctional enzyme that catalyzes the enolization of 2,3-diketo-5-methylthiopentyl-1-phosphate (DK-MTP-1-P) into the intermediate 2-hydroxy-3-keto-5-methylthiopentenyl-1-phosphate (HK-MTPenyl-1-P), which is then dephosphorylated to form the acireductone 1,2-dihydroxy-3-keto-5-methylthiopentene (DHK-MTPene). This is Enolase-phosphatase E1 from Xylella fastidiosa (strain M12).